The primary structure comprises 62 residues: UPF0337 protein XAC0100 (62 aa).

Belongs to the UPF0337 (CsbD) family.

The sequence is that of UPF0337 protein XAC0100 from Xanthomonas axonopodis pv. citri (strain 306).